The chain runs to 142 residues: Large ribosomal subunit protein uL13 (142 aa).

The protein belongs to the universal ribosomal protein uL13 family. As to quaternary structure, part of the 50S ribosomal subunit.

Functionally, this protein is one of the early assembly proteins of the 50S ribosomal subunit, although it is not seen to bind rRNA by itself. It is important during the early stages of 50S assembly. This chain is Large ribosomal subunit protein uL13, found in Pseudoalteromonas translucida (strain TAC 125).